A 497-amino-acid polypeptide reads, in one-letter code: Glycine receptor subunit beta (497 aa).

A signal peptide spans 1–22; the sequence is MKFLLTTAFLILISLWVEEAYS. At 23 to 268 the chain is on the extracellular side; that stretch reads KEKSSKKGKG…IFTLRRQVGF (246 aa). Asn-54 is a glycosylation site (N-linked (GlcNAc...) asparagine). Glycine is bound by residues Arg-108 and Ser-174. The cysteines at positions 183 and 197 are disulfide-linked. Residue Asn-242 is glycosylated (N-linked (GlcNAc...) asparagine). A disulfide bond links Cys-243 and Cys-255. A glycine-binding site is contributed by Thr-250. Residues 269 to 289 form a helical membrane-spanning segment; that stretch reads YMMGVYAPTLLIVVLSWLSFW. Residues 290-294 lie on the Cytoplasmic side of the membrane; that stretch reads INPDA. Residues 295-315 form a helical membrane-spanning segment; it reads SAARVPLGIFSVLSLASECTT. At 316–327 the chain is on the extracellular side; that stretch reads LAAELPKVSYVK. The helical transmembrane segment at 328–349 threads the bilayer; that stretch reads ALDVWLIACLLFGFASLVEYAV. Residues 350–472 lie on the Cytoplasmic side of the membrane; it reads VQVMLNNPKR…KPVIPTAAKR (123 aa). A Phosphothreonine modification is found at Thr-391. A helical membrane pass occupies residues 473-496; the sequence is IDLYARALFPFCFLFFNVIYWSIY.

The protein belongs to the ligand-gated ion channel (TC 1.A.9) family. Glycine receptor (TC 1.A.9.3) subfamily. GLRB sub-subfamily. As to quaternary structure, forms heteropentamers with glycin receptor alpha subunits. Heteropentamers with GLRA1 can be composed of two GLRA1 and three GLRB subunits, or three GLRA1 and two GLRB subunits, or four GLRA1 subunits and one GLRB subunit. Forms heteropentamers with GLRA2. Functional GLRB-GLRA2 heteropentamers contain four GLRA2 subunits and one GLRB subunit, although alternative subunit composition cannot be excluded. Forms a heteropentamer with GLRA3. Interacts with GPHN.

Its subcellular location is the postsynaptic cell membrane. It is found in the synapse. The protein localises to the cell projection. It localises to the dendrite. The protein resides in the cell membrane. Its subcellular location is the cytoplasm. It carries out the reaction chloride(in) = chloride(out). Its activity is regulated as follows. Channel opening is triggered by extracellular glycine. Heteropentameric channels composed of GLRB and GLRA1 are activated by lower glycine levels than homopentameric GLRA1. Functionally, subunit of heteromeric glycine-gated chloride channels. Plays an important role in the down-regulation of neuronal excitability. Contributes to the generation of inhibitory postsynaptic currents. The protein is Glycine receptor subunit beta (GLRB) of Homo sapiens (Human).